Consider the following 601-residue polypeptide: Mitochondrial tRNA methylthiotransferase CDK5RAP1 (601 aa).

The transit peptide at 1-33 (MHPLQCVLQVQRSLGWGPLASVSWLSLRMCRAH) directs the protein to the mitochondrion. Residues 100 to 220 (RKVYLETYGC…LPRLLAVAES (121 aa)) enclose the MTTase N-terminal domain. Positions 109, 145, 183, 258, 262, and 265 each coordinate [4Fe-4S] cluster. The Radical SAM core domain maps to 244 to 512 (SASATSAFVS…ITIFREEATK (269 aa)). Residues 515–590 (QTSVGCTQLV…SQTLRGHVLC (76 aa)) enclose the TRAM domain.

The protein belongs to the methylthiotransferase family. MiaB subfamily. Interacts with CDK5R1 (p35 form). CDK5RAP1, CDK5RAP2 and CDK5RAP3 show competitive binding to CDK5R1. Forms a complex with CDK5R1 and CDK5. Requires [4Fe-4S] cluster as cofactor. As to expression, expressed in heart, brain, placenta, lung, liver, skeletal muscle, kidney and pancreas. Expressed in neurons of central nervous tissue. In terms of tissue distribution, mainly expressed in brain, placenta and testis. High expression in placenta and lung.

It localises to the mitochondrion. The enzyme catalyses N(6)-dimethylallyladenosine(37) in tRNA + (sulfur carrier)-SH + AH2 + 2 S-adenosyl-L-methionine = 2-methylsulfanyl-N(6)-dimethylallyladenosine(37) in tRNA + (sulfur carrier)-H + 5'-deoxyadenosine + L-methionine + A + S-adenosyl-L-homocysteine + 2 H(+). In terms of biological role, methylthiotransferase that catalyzes the conversion of N6-(dimethylallyl)adenosine (i(6)A) to 2-methylthio-N6-(dimethylallyl)adenosine (ms(2)i(6)A) at position 37 (adjacent to the 3'-end of the anticodon) of four mitochondrial DNA-encoded tRNAs (Ser(UCN), Phe, Tyr and Trp). Essential for efficient and highly accurate protein translation by the ribosome. Specifically inhibits CDK5 activation by CDK5R1. Essential for efficient mitochondrial protein synthesis and respiratory chain; shows pathological consequences in mitochondrial disease. The protein is Mitochondrial tRNA methylthiotransferase CDK5RAP1 of Homo sapiens (Human).